Consider the following 172-residue polypeptide: Transcription factor MafF (172 aa).

The interval 51–76 (RLKQRRRTLKNRGYAASCRVKRVCQK) is basic motif. Residues 51–114 (RLKQRRRTLK…DALRGKCEAL (64 aa)) enclose the bZIP domain. Residues 79–93 (LQKQKSELEREVDKL) form a leucine-zipper region. Residues 140–172 (VKSAPSPGPGPAPGPGPASGPGPAPGPAPAACS) form a disordered region. Positions 145–172 (SPGPGPAPGPGPASGPGPAPGPAPAACS) are enriched in pro residues.

The protein belongs to the bZIP family. Maf subfamily. Monomer and homo- or heterodimer. Interacts with MIP. Forms high affinity heterodimers with members of the CNC-bZIP family such as NFE2L1/NRF1.

The protein localises to the nucleus. Since they lack a putative transactivation domain, the small Mafs behave as transcriptional repressors when they dimerize among themselves. However, they seem to serve as transcriptional activators by dimerizing with other (usually larger) basic-zipper proteins, such as NFE2L1/NRF1, and recruiting them to specific DNA-binding sites. Interacts with the upstream promoter region of the oxytocin receptor gene. May be a transcriptional enhancer in the up-regulation of the oxytocin receptor gene at parturition. This Bos taurus (Bovine) protein is Transcription factor MafF (MAFF).